The chain runs to 441 residues: Ribosomal protein uS12 methylthiotransferase RimO (441 aa).

In terms of domain architecture, MTTase N-terminal spans 5-116; sequence PTIAFTHLGC…IVDVMQRVEK (112 aa). [4Fe-4S] cluster-binding residues include cysteine 14, cysteine 50, cysteine 79, cysteine 154, cysteine 158, and cysteine 161. A Radical SAM core domain is found at 140–370; the sequence is TTSEGVAYVR…EVQQSISWQQ (231 aa). Residues 372–438 enclose the TRAM domain; it reads QKLVGQLVDV…IYDLYGCLIS (67 aa).

This sequence belongs to the methylthiotransferase family. RimO subfamily. [4Fe-4S] cluster serves as cofactor.

Its subcellular location is the cytoplasm. It carries out the reaction L-aspartate(89)-[ribosomal protein uS12]-hydrogen + (sulfur carrier)-SH + AH2 + 2 S-adenosyl-L-methionine = 3-methylsulfanyl-L-aspartate(89)-[ribosomal protein uS12]-hydrogen + (sulfur carrier)-H + 5'-deoxyadenosine + L-methionine + A + S-adenosyl-L-homocysteine + 2 H(+). Functionally, catalyzes the methylthiolation of an aspartic acid residue of ribosomal protein uS12. The polypeptide is Ribosomal protein uS12 methylthiotransferase RimO (Trichodesmium erythraeum (strain IMS101)).